A 540-amino-acid polypeptide reads, in one-letter code: Cytochrome P450 monooxygenase CYP3 (540 aa).

The N-linked (GlcNAc...) asparagine glycan is linked to N2. The helical transmembrane segment at 26-46 (IFGLSSSTLVVLVAMIAVSTL) threads the bilayer. 3 N-linked (GlcNAc...) asparagine glycosylation sites follow: N100, N210, and N400. Position 471 (C471) interacts with heme.

Belongs to the cytochrome P450 family. Requires heme as cofactor.

The protein resides in the membrane. It participates in secondary metabolite biosynthesis. Its function is as follows. Cytochrome P450 monooxygenase; part of the gene cluster that mediates the biosynthesis of itaconic acid and 2-hydroxyparaconate. Cis-aconitate is secreted by the mitochondrial tricarboxylate transporter MTT1. In the cytosol cis-aconitate is converted into trans-aconitate via isomerization by the aconitate-delta-isomerase ADI1. Decarboxylation of trans-aconitate by the trans-aconitate decarboxylase TAD1 then leads then to the production of itaconic acid. The cytochrome P450 monooxygenase CYP3 further converts itaconate to 2-hydroxyparaconate via oxidation of the double bond, leading to a transient epoxide, which can subsequently be lactonized to produce 2-hydroxyparaconate. Secretion of itaconate and possibly 2-hydroxyparaconate into the medium is mediated by the major facilitator ITP1. The glyoxalase domain-containing protein RDO1 is not involved in the biosynthesis of itaconate and 2-hydroxyparaconate, however, it might play a role in the further conversion of 2-hydroxyparaconate to itatartarate. The polypeptide is Cytochrome P450 monooxygenase CYP3 (Mycosarcoma maydis (Corn smut fungus)).